A 293-amino-acid polypeptide reads, in one-letter code: Aspartate carbamoyltransferase catalytic subunit (293 aa).

The carbamoyl phosphate site is built by Arg-50 and Thr-51. Lys-78 lines the L-aspartate pocket. Residues Arg-100, His-127, and Gln-130 each coordinate carbamoyl phosphate. L-aspartate is bound by residues Arg-160 and Arg-210. Residues Ala-253 and Pro-254 each coordinate carbamoyl phosphate.

It belongs to the aspartate/ornithine carbamoyltransferase superfamily. ATCase family. Heterododecamer (2C3:3R2) of six catalytic PyrB chains organized as two trimers (C3), and six regulatory PyrI chains organized as three dimers (R2).

It catalyses the reaction carbamoyl phosphate + L-aspartate = N-carbamoyl-L-aspartate + phosphate + H(+). Its pathway is pyrimidine metabolism; UMP biosynthesis via de novo pathway; (S)-dihydroorotate from bicarbonate: step 2/3. In terms of biological role, catalyzes the condensation of carbamoyl phosphate and aspartate to form carbamoyl aspartate and inorganic phosphate, the committed step in the de novo pyrimidine nucleotide biosynthesis pathway. The sequence is that of Aspartate carbamoyltransferase catalytic subunit from Staphylococcus aureus (strain USA300).